The primary structure comprises 61 residues: Large ribosomal subunit protein uL30 (61 aa).

The protein belongs to the universal ribosomal protein uL30 family. As to quaternary structure, part of the 50S ribosomal subunit.

The protein is Large ribosomal subunit protein uL30 of Saccharophagus degradans (strain 2-40 / ATCC 43961 / DSM 17024).